The sequence spans 253 residues: uncharacterized protein (253 aa).

9 residues coordinate NADP(+): Ile-17, Ser-36, Asp-62, Asn-89, Lys-123, Tyr-158, Lys-162, Val-191, and Thr-193. Tyr-158 serves as the catalytic Proton acceptor. Lys-162 (lowers pKa of active site Tyr) is an active-site residue.

This sequence belongs to the short-chain dehydrogenases/reductases (SDR) family.

The protein resides in the cytoplasm. It localises to the nucleus. This is an uncharacterized protein from Schizosaccharomyces pombe (strain 972 / ATCC 24843) (Fission yeast).